Reading from the N-terminus, the 216-residue chain is Adenylate kinase (216 aa).

10 to 15 (GAGKGT) provides a ligand contact to ATP. The segment at 30-59 (STGDMLRAAVKAGTPLGLELKKVMDAGQLV) is NMP. AMP-binding positions include Thr31, Arg36, 57–59 (QLV), 85–88 (GFPR), and Gln92. Residues 122 to 159 (GRRVHLASGRTYHIQYNPPKVEGKDDVTGEDLIQRDDD) are LID. Residues Arg123 and 132-133 (TY) each bind ATP. 2 residues coordinate AMP: Arg156 and Arg167. Residue Gly202 participates in ATP binding.

Belongs to the adenylate kinase family. In terms of assembly, monomer.

The protein resides in the cytoplasm. The catalysed reaction is AMP + ATP = 2 ADP. It participates in purine metabolism; AMP biosynthesis via salvage pathway; AMP from ADP: step 1/1. In terms of biological role, catalyzes the reversible transfer of the terminal phosphate group between ATP and AMP. Plays an important role in cellular energy homeostasis and in adenine nucleotide metabolism. The protein is Adenylate kinase of Pseudomonas putida (strain GB-1).